The chain runs to 311 residues: MKVAVLGAAGGIGQALALLLKLQLPAGTDLALYDIAPVTPGVAVDVSHIPTAVNVKGFSGEDPTPALEGADVVLISAGVARKPGMDRSDLFNINAGIVRGLIEKVAVTCPKACVGIITNPVNTTVAIAAEVLKKAGVYDKRKLFGVTTLDVLRSETFVAELKGLNVSRTSVPVIGGHSGVTILPLLSQVQYAKWNEDEIEPLTKRIQNAGTEVVNAKAGGGSATLSMAQAAARFARSLVKGLSGETVVECTYVEGDGKYARFFSQPVRLGKEGVEEILPIGPLSNFEQQALENMLPTLHADIELGEKFING.

Residues 7–13 (GAAGGIG) and Asp-34 contribute to the NAD(+) site. Substrate is bound by residues Arg-81 and Arg-87. NAD(+) is bound by residues Asn-94 and 117–119 (ITN). Residues Asn-119 and Arg-153 each contribute to the substrate site. Catalysis depends on His-177, which acts as the Proton acceptor. Residue Met-227 participates in NAD(+) binding.

Belongs to the LDH/MDH superfamily. MDH type 1 family. In terms of assembly, homodimer.

The enzyme catalyses (S)-malate + NAD(+) = oxaloacetate + NADH + H(+). Its function is as follows. Catalyzes the reversible oxidation of malate to oxaloacetate. This Haemophilus influenzae (strain PittEE) protein is Malate dehydrogenase.